Here is a 341-residue protein sequence, read N- to C-terminus: Serpentine receptor class alpha-28 (341 aa).

7 helical membrane-spanning segments follow: residues 25–45 (FIIS…RVLL), 57–77 (LLFS…VIRL), 107–129 (YYYT…LFSF), 142–162 (ASIV…YWVF), 188–208 (VNNI…FLYI), 242–262 (IVIF…SVFI), and 275–295 (LIIS…LIIL).

Belongs to the nematode receptor-like protein sra family.

Its subcellular location is the membrane. This is Serpentine receptor class alpha-28 (sra-28) from Caenorhabditis elegans.